The chain runs to 502 residues: MSEQEVKELDLNGEMLVRREKLSALRAKGNAFPNKFRRDALAQDLHNQYDSEDGEILKEKGVEVQVAGRIMTRRAMGKATFITIQDMSGKIQLYVARDNLPEGVYAEDVGNWDLGDIIGVKGTLFKTKTNELTIKTTEVQLLTKALRPLPDKFHGLTDQEVRYRQRYLDLISNEESRRTFIIRSKVVAGIREYFISKGFMEVETPMLQVIPGGASARPFVTHHNALDVDMYLRIAPELYLKRLVVGGFERVFELNRNFRNEGVSVRHNPEFTMLEYYQAYADYHDLMDNTEELLRKLAIDILGTTIVKYGDLEFDFGKPFERITLHDATVKYGADKGIVKEDLYDFDRAKATAERLGIEVQKSWGLGSIVNAIFEEVAEHHLIQPTFLMAHPAEISPLARRNDENPEVTDRFELFIGGREIGNGFSELNDAEDQNERFDAQVAAKEAGDDEAMFKDEDFVVALEHGLPPTAGEGLGIDRLAMLYANAPSIRDVILFPAMRQK.

Glu-413 and Glu-420 together coordinate Mg(2+).

The protein belongs to the class-II aminoacyl-tRNA synthetase family. In terms of assembly, homodimer. It depends on Mg(2+) as a cofactor.

Its subcellular location is the cytoplasm. It catalyses the reaction tRNA(Lys) + L-lysine + ATP = L-lysyl-tRNA(Lys) + AMP + diphosphate. This is Lysine--tRNA ligase from Haemophilus influenzae (strain PittEE).